We begin with the raw amino-acid sequence, 1701 residues long: DDB1- and CUL4-associated factor homolog 1 (1701 aa).

Polar residues predominate over residues His224 to Gly245. Disordered stretches follow at residues His224–Glu269, Asp883–Phe906, and Arg932–Leu961. The LisH domain occupies Asn851–Asp883. A compositionally biased stretch (polar residues) spans Arg888 to Phe906. WD repeat units lie at residues Asp1086–His1125, Cys1128–His1169, Tyr1171–Leu1210, and Gly1215–Asp1252. Short sequence motifs (DWD box) lie at residues Leu1237–Asn1245 and Glu1275–Phe1282. 3 disordered regions span residues Ile1384–Leu1559, Glu1566–Pro1585, and Leu1641–Ala1701. Composition is skewed to acidic residues over residues Asn1390–Ile1423 and Asp1451–Phe1461. Over residues Ile1468–Arg1479 the composition is skewed to basic residues. Composition is skewed to acidic residues over residues Glu1494–Phe1512 and Asp1520–Ser1543. Residues Ala1567–Arg1581 are compositionally biased toward basic and acidic residues. Residues Asp1667–Ile1678 are compositionally biased toward acidic residues.

It belongs to the VPRBP/DCAF1 family. Component of the cul4-rbx1-ddb1-dcaf1 E3 ubiquitin-protein ligase complex.

The protein localises to the nucleus. The protein operates within protein modification; protein ubiquitination. Functionally, component of the cul4-rbx1-ddb1-dcaf1 E3 ubiquitin-protein ligase complex, dcaf1 may function as the substrate recognition module within this complex. In Caenorhabditis elegans, this protein is DDB1- and CUL4-associated factor homolog 1 (dcaf-1).